Reading from the N-terminus, the 259-residue chain is GTP cyclohydrolase FolE2 (259 aa).

It belongs to the GTP cyclohydrolase IV family.

The catalysed reaction is GTP + H2O = 7,8-dihydroneopterin 3'-triphosphate + formate + H(+). The protein operates within cofactor biosynthesis; 7,8-dihydroneopterin triphosphate biosynthesis; 7,8-dihydroneopterin triphosphate from GTP: step 1/1. Its function is as follows. Converts GTP to 7,8-dihydroneopterin triphosphate. The sequence is that of GTP cyclohydrolase FolE2 from Thermosipho melanesiensis (strain DSM 12029 / CIP 104789 / BI429).